Consider the following 215-residue polypeptide: Phosphatidylserine decarboxylase proenzyme (215 aa).

Catalysis depends on serine 183, which acts as the Schiff-base intermediate with substrate; via pyruvic acid. Serine 183 bears the Pyruvic acid (Ser); by autocatalysis mark.

The protein belongs to the phosphatidylserine decarboxylase family. PSD-A subfamily. In terms of assembly, heterodimer of a large membrane-associated beta subunit and a small pyruvoyl-containing alpha subunit. The cofactor is pyruvate. Is synthesized initially as an inactive proenzyme. Formation of the active enzyme involves a self-maturation process in which the active site pyruvoyl group is generated from an internal serine residue via an autocatalytic post-translational modification. Two non-identical subunits are generated from the proenzyme in this reaction, and the pyruvate is formed at the N-terminus of the alpha chain, which is derived from the carboxyl end of the proenzyme. The post-translation cleavage follows an unusual pathway, termed non-hydrolytic serinolysis, in which the side chain hydroxyl group of the serine supplies its oxygen atom to form the C-terminus of the beta chain, while the remainder of the serine residue undergoes an oxidative deamination to produce ammonia and the pyruvoyl prosthetic group on the alpha chain.

The protein localises to the cell membrane. It catalyses the reaction a 1,2-diacyl-sn-glycero-3-phospho-L-serine + H(+) = a 1,2-diacyl-sn-glycero-3-phosphoethanolamine + CO2. The protein operates within phospholipid metabolism; phosphatidylethanolamine biosynthesis; phosphatidylethanolamine from CDP-diacylglycerol: step 2/2. Functionally, catalyzes the formation of phosphatidylethanolamine (PtdEtn) from phosphatidylserine (PtdSer). The sequence is that of Phosphatidylserine decarboxylase proenzyme from Symbiobacterium thermophilum (strain DSM 24528 / JCM 14929 / IAM 14863 / T).